The following is a 459-amino-acid chain: Argininosuccinate lyase (459 aa).

The disordered stretch occupies residues 440–459 (DEKKLEELRQNENRDNVYNP).

It belongs to the lyase 1 family. Argininosuccinate lyase subfamily.

The protein resides in the cytoplasm. It carries out the reaction 2-(N(omega)-L-arginino)succinate = fumarate + L-arginine. The protein operates within amino-acid biosynthesis; L-arginine biosynthesis; L-arginine from L-ornithine and carbamoyl phosphate: step 3/3. The protein is Argininosuccinate lyase of Pyrococcus furiosus (strain ATCC 43587 / DSM 3638 / JCM 8422 / Vc1).